The chain runs to 109 residues: Ribonuclease P protein component (109 aa).

It belongs to the RnpA family. As to quaternary structure, consists of a catalytic RNA component (M1 or rnpB) and a protein subunit.

The catalysed reaction is Endonucleolytic cleavage of RNA, removing 5'-extranucleotides from tRNA precursor.. RNaseP catalyzes the removal of the 5'-leader sequence from pre-tRNA to produce the mature 5'-terminus. It can also cleave other RNA substrates such as 4.5S RNA. The protein component plays an auxiliary but essential role in vivo by binding to the 5'-leader sequence and broadening the substrate specificity of the ribozyme. The polypeptide is Ribonuclease P protein component (Streptococcus agalactiae serotype III (strain NEM316)).